We begin with the raw amino-acid sequence, 747 residues long: Ferrichrome outer membrane transporter/phage receptor (747 aa).

The signal sequence occupies residues Met1–Ala33. Residues Ala34 to Glu192 are Periplasmic-facing. The short motif at Asp40–Ala47 is the TonB box element. Positions Pro75–Lys187 constitute a TBDR plug domain. Ferrichrome contacts are provided by residues Arg114, Gln133, and Phe148–Tyr149. A TBDR beta-barrel domain is found at Glu192 to Phe747. A beta stranded membrane pass occupies residues Pro193–Ala201. At Gly202 to Leu206 the chain is on the extracellular side. The beta stranded transmembrane segment at Phe207–Asp215 threads the bilayer. Residues Ser216–Val222 are Periplasmic-facing. A beta stranded transmembrane segment spans residues Tyr223–Ala231. At Arg232–Arg245 the chain is on the extracellular side. A beta stranded transmembrane segment spans residues Tyr246–Arg255. At Pro256–Lys259 the chain is on the periplasmic side. A beta stranded transmembrane segment spans residues Thr260–Phe268. Over Gln269 to Glu312 the chain is Extracellular. Tyr277–Trp279 contributes to the ferrichrome binding site. A beta stranded membrane pass occupies residues Lys313–His321. The Periplasmic portion of the chain corresponds to Glu322–Thr326. The beta stranded transmembrane segment at Phe327 to Phe335 threads the bilayer. At Ala336–Asn387 the chain is on the extracellular side. Residue Tyr346–Tyr348 coordinates ferrichrome. Residues Cys351 and Cys362 are joined by a disulfide bond. A beta stranded transmembrane segment spans residues Phe388–Ser396. Topologically, residues Lys397–Asp404 are periplasmic. A beta stranded membrane pass occupies residues His405–Phe413. At Met414–Gln464 the chain is on the extracellular side. Phe424 provides a ligand contact to ferrichrome. The chain crosses the membrane as a beta stranded span at residues Thr465–Ala473. At Gln474–Lys477 the chain is on the periplasmic side. Residues Val478–Tyr486 form a beta stranded membrane-spanning segment. Residues Asp487–Gln508 are Extracellular-facing. Residues Phe509–Tyr517 form a beta stranded membrane-spanning segment. At Leu518 to Gly522 the chain is on the periplasmic side. Residues Val523–Glu531 form a beta stranded membrane-spanning segment. Residues Ser532–Gly551 are Extracellular-facing. Residues Lys552–Tyr560 traverse the membrane as a beta stranded segment. At Val561–Arg565 the chain is on the periplasmic side. The beta stranded transmembrane segment at Pro566 to Tyr574 threads the bilayer. Over Asn575–Arg601 the chain is Extracellular. The chain crosses the membrane as a beta stranded span at residues Gly602 to Ala610. The Periplasmic portion of the chain corresponds to Leu611–Ala613. A beta stranded transmembrane segment spans residues Ser614–Thr622. Over Tyr623–His645 the chain is Extracellular. A beta stranded transmembrane segment spans residues Met646–Thr654. Residues Phe655–Ser661 are Periplasmic-facing. The beta stranded transmembrane segment at Gly662–Arg670 threads the bilayer. Topologically, residues Tyr671–Thr689 are extracellular. The chain crosses the membrane as a beta stranded span at residues Val690–Asp698. At Leu699–Ala705 the chain is on the periplasmic side. The chain crosses the membrane as a beta stranded span at residues Gly706 to Asn714. Over Asn715 to Arg737 the chain is Extracellular. Cys725 and Cys731 are disulfide-bonded. Positions Gly730–Phe747 match the TonB C-terminal box motif. Residue Ala735 coordinates ferrichrome. The beta stranded transmembrane segment at Gln738–Arg746 threads the bilayer. Phe747 is a topological domain (periplasmic).

This sequence belongs to the TonB-dependent receptor family. In terms of assembly, monomer. Interacts with TonB. Interacts with Escherichia phage T5 receptor-binding protein pb5 (RBP-pb5); this interaction is necessary for the entry of the viral genome into the host cell.

Its subcellular location is the cell outer membrane. Its activity is regulated as follows. Binding of ferrichrome or colicin M enhances the interaction between FhuA and TonB. TonB activates FhuA through interaction with the beta-barrel. Involved in the uptake of iron in complex with ferrichrome, a hydroxamate-type siderophore. Binds and transports ferrichrome-iron across the outer membrane. In addition to its role in ferrichrome-iron transport, transports the antibiotic albomycin, which is a structural analog of ferrichrome, and acts as a receptor for colicin M, microcin J25 and bacteriophages T1, T5, phi80 and UC-1. The energy source, which is required for all FhuA functions except infection by phage T5, is provided by the inner membrane TonB system. The sequence is that of Ferrichrome outer membrane transporter/phage receptor from Escherichia coli (strain K12).